We begin with the raw amino-acid sequence, 121 residues long: Huntingtin-interacting protein K (121 aa).

A compositionally biased stretch (acidic residues) spans M1–T13. The tract at residues M1 to K75 is disordered. 2 stretches are compositionally biased toward basic and acidic residues: residues R20 to I47 and G60 to K75. S30 carries the phosphoserine modification. Residues L52–N121 are required for association with the NAA10-NAA15 complex. The stretch at R62–E107 forms a coiled coil.

Component of the N-terminal acetyltransferase A (NatA)/HYPK complex at least composed of NAA10, NAA15 and HYPK, which has N-terminal acetyltransferase activity. Within the complex interacts with NAA10. Within the complex interacts with NAA15. Predominantly interacts with NAA15 in the NAA10-NAA15 complex (also called the NatA complex); the interaction with the NatA complex reduces the acetylation activity of the NatA complex. Interacts with HTT (via N-terminus). The NatA complex is required for HYPK stability and for reducing polyQ aggregation of HTT. Component of the N-terminal acetyltransferase E (NatE)/HYPK complex at least composed of NAA10, NAA15, NAA50 and HYPK. Within the complex interacts with NAA10 and NAA15. Does not interact with NAA50. Interaction with NAA15 reduces the capacity of NAA15 to interact with NAA50. Its capacity to interact with the NatA complex is reduced by NAA50. Does not interact with the N-terminal acetyltransferase B (NatB) complex component NAA25 or the N-terminal acetyltransferase C (NatC) complex component NAA35.

The protein localises to the nucleus. It is found in the cytoplasm. Component of several N-terminal acetyltransferase complexes. Inhibits the N-terminal acetylation activity of the N-terminal acetyltransferase NAA10-NAA15 complex (also called the NatA complex). Has chaperone-like activity preventing polyglutamine (polyQ) aggregation of HTT in neuronal cells probably while associated with the NatA complex. May play a role in the NatA complex-mediated N-terminal acetylation of PCNP. The chain is Huntingtin-interacting protein K from Homo sapiens (Human).